The following is a 109-amino-acid chain: Putative double-stranded DNA mimic protein Ent638_2296 (109 aa).

Belongs to the putative dsDNA mimic protein family.

May act as a double-stranded DNA (dsDNA) mimic. Probably regulates the activity of a dsDNA-binding protein. This is Putative double-stranded DNA mimic protein Ent638_2296 from Enterobacter sp. (strain 638).